The following is a 340-amino-acid chain: ATPase BagA (340 aa).

Residues G31, G33, K34, S35, T36, N240, P316, and V318 each coordinate ATP.

The protein belongs to the arsA ATPase family. BagA/BagB subfamily. In terms of assembly, forms a heterodimer composed of BagA and BagB. Interacts with Rv1509. Also interacts with a large number of proteins, including proteins required for mycolic acid biosynthesis.

Its activity is regulated as follows. The ATPase activity of the BagAB complex is not stimulated by antimonite, an arsenite substitute, suggesting that BagAB is not a transporter for this family of elements. Functionally, component of the heterodimeric BagAB ATPase complex, whose two subunits are actively involved in ATP hydrolysis. The ATPase activity is required to mediate resistance against nitric oxide (NO) and elevated levels of glycerol. The chain is ATPase BagA from Mycobacterium tuberculosis (strain ATCC 25618 / H37Rv).